The primary structure comprises 228 residues: Thymidine kinase (228 aa).

Residue 23–30 coordinates ATP; that stretch reads GNIGCGKS. E50 serves as the catalytic Proton acceptor. Residues Y68, Q79, and F109 each contribute to the substrate site. R157 is a binding site for ATP.

The protein belongs to the DCK/DGK family.

It catalyses the reaction thymidine + ATP = dTMP + ADP + H(+). This is Thymidine kinase (TK) from Ictaluridae (bullhead catfishes).